We begin with the raw amino-acid sequence, 105 residues long: Met repressor (105 aa).

It belongs to the MetJ family. As to quaternary structure, homodimer.

It localises to the cytoplasm. In terms of biological role, this regulatory protein, when combined with SAM (S-adenosylmethionine) represses the expression of the methionine regulon and of enzymes involved in SAM synthesis. In Sodalis glossinidius (strain morsitans), this protein is Met repressor.